We begin with the raw amino-acid sequence, 378 residues long: TelA-like protein SAUSA300_1299 (378 aa).

It belongs to the TelA family.

The protein is TelA-like protein SAUSA300_1299 of Staphylococcus aureus (strain USA300).